Here is a 272-residue protein sequence, read N- to C-terminus: Carbonic anhydrase (272 aa).

Cys-39, His-98, and Cys-101 together coordinate Zn(2+).

Belongs to the beta-class carbonic anhydrase family. A hexamer formed by a trimer of dimers. Purified from carboxysomes with the both RuBisCO subunits and the full-length form of CcmM, probably interacts with the N-terminus of CcmM. The cofactor is Zn(2+).

Its subcellular location is the carboxysome. The catalysed reaction is hydrogencarbonate + H(+) = CO2 + H2O. In terms of biological role, reversible hydration of carbon dioxide. Essential to photosynthetic carbon dioxide fixation, supplies CO(2) to RuBisCO (ribulose bisphosphate carboxylase, rbcL-rbcS) in the carboxysome. Loss of activity results in limitation of CO(2) availability to RuBisCO located in the cytoplasm. The chain is Carbonic anhydrase from Synechococcus elongatus (strain ATCC 33912 / PCC 7942 / FACHB-805) (Anacystis nidulans R2).